A 284-amino-acid chain; its full sequence is NAD kinase (284 aa).

D65 acts as the Proton acceptor in catalysis. NAD(+)-binding positions include 65–66 (DG), 139–140 (ND), R150, R167, D169, and Q239.

The protein belongs to the NAD kinase family. Requires a divalent metal cation as cofactor.

It is found in the cytoplasm. The catalysed reaction is NAD(+) + ATP = ADP + NADP(+) + H(+). Involved in the regulation of the intracellular balance of NAD and NADP, and is a key enzyme in the biosynthesis of NADP. Catalyzes specifically the phosphorylation on 2'-hydroxyl of the adenosine moiety of NAD to yield NADP. The protein is NAD kinase of Desulfatibacillum aliphaticivorans.